The chain runs to 78 residues: Large ribosomal subunit protein bL28 (78 aa).

Belongs to the bacterial ribosomal protein bL28 family.

This Acaryochloris marina (strain MBIC 11017) protein is Large ribosomal subunit protein bL28.